A 122-amino-acid polypeptide reads, in one-letter code: Small ribosomal subunit protein uS13 (122 aa).

Residues 97-122 form a disordered region; that stretch reads PVRGQRTKTNARTRKGPARTVAGKKK.

The protein belongs to the universal ribosomal protein uS13 family. As to quaternary structure, part of the 30S ribosomal subunit. Forms a loose heterodimer with protein S19. Forms two bridges to the 50S subunit in the 70S ribosome.

Its function is as follows. Located at the top of the head of the 30S subunit, it contacts several helices of the 16S rRNA. In the 70S ribosome it contacts the 23S rRNA (bridge B1a) and protein L5 of the 50S subunit (bridge B1b), connecting the 2 subunits; these bridges are implicated in subunit movement. Contacts the tRNAs in the A and P-sites. This Geobacter metallireducens (strain ATCC 53774 / DSM 7210 / GS-15) protein is Small ribosomal subunit protein uS13.